The primary structure comprises 279 residues: Oxygen-dependent coproporphyrinogen-III oxidase (279 aa).

S102 is a binding site for substrate. 2 residues coordinate a divalent metal cation: H106 and H116. H116 serves as the catalytic Proton donor. A substrate-binding site is contributed by 118-120; it reads NTR. A divalent metal cation contacts are provided by H149 and H179. The interval 244–279 is important for dimerization; sequence YVEFNLLYDRGTKFGLMTDGNVEAILMSLPPEVKFN.

This sequence belongs to the aerobic coproporphyrinogen-III oxidase family. Homodimer. It depends on a divalent metal cation as a cofactor.

It is found in the cytoplasm. It catalyses the reaction coproporphyrinogen III + O2 + 2 H(+) = protoporphyrinogen IX + 2 CO2 + 2 H2O. Its pathway is porphyrin-containing compound metabolism; protoporphyrin-IX biosynthesis; protoporphyrinogen-IX from coproporphyrinogen-III (O2 route): step 1/1. Its function is as follows. Involved in the heme biosynthesis. Catalyzes the aerobic oxidative decarboxylation of propionate groups of rings A and B of coproporphyrinogen-III to yield the vinyl groups in protoporphyrinogen-IX. The chain is Oxygen-dependent coproporphyrinogen-III oxidase from Rickettsia conorii (strain ATCC VR-613 / Malish 7).